Consider the following 344-residue polypeptide: UPF0283 membrane protein YcjF (344 aa).

Helical transmembrane passes span 70 to 90 (MVMGGLALFGASVVGQGVQWT), 100 to 120 (VALGGCAAGALIIGAGVGSVV), and 213 to 233 (ESTLMIAVSPLALVDMAFIAW).

This sequence belongs to the UPF0283 family.

It localises to the cell inner membrane. This is UPF0283 membrane protein YcjF from Shigella dysenteriae serotype 1 (strain Sd197).